We begin with the raw amino-acid sequence, 209 residues long: MTLASQIASDLLDIKAVYLKPEEPFTWASGIKSPIYTDNRITLSYPETRTLIENGFVKKIKEEFPEVEVIAGTATAGIPHGAIIADKMNLPFAYIRSKPKDHGAGNQIEGRVVKGEKMVVVEDLISTGGSVLDAVAAAEREGADVIGVVAIFTYELPKAEKNFAEAGVKLVTLSNYTELIKVAKVKGYITADGLQLLKKFKENQETWQD.

Residues arginine 96, lysine 100, histidine 102, and 122–130 contribute to the 5-phospho-alpha-D-ribose 1-diphosphate site; that span reads EDLISTGGS. Residue serine 126 coordinates orotate.

Belongs to the purine/pyrimidine phosphoribosyltransferase family. PyrE subfamily. In terms of assembly, homodimer. Mg(2+) is required as a cofactor.

It catalyses the reaction orotidine 5'-phosphate + diphosphate = orotate + 5-phospho-alpha-D-ribose 1-diphosphate. Its pathway is pyrimidine metabolism; UMP biosynthesis via de novo pathway; UMP from orotate: step 1/2. Functionally, catalyzes the transfer of a ribosyl phosphate group from 5-phosphoribose 1-diphosphate to orotate, leading to the formation of orotidine monophosphate (OMP). This chain is Orotate phosphoribosyltransferase, found in Streptococcus thermophilus (strain ATCC BAA-491 / LMD-9).